The primary structure comprises 88 residues: DNA-directed RNA polymerase subunit omega (88 aa).

This sequence belongs to the RNA polymerase subunit omega family. As to quaternary structure, the RNAP catalytic core consists of 2 alpha, 1 beta, 1 beta' and 1 omega subunit. When a sigma factor is associated with the core the holoenzyme is formed, which can initiate transcription.

The enzyme catalyses RNA(n) + a ribonucleoside 5'-triphosphate = RNA(n+1) + diphosphate. Promotes RNA polymerase assembly. Latches the N- and C-terminal regions of the beta' subunit thereby facilitating its interaction with the beta and alpha subunits. In Actinobacillus succinogenes (strain ATCC 55618 / DSM 22257 / CCUG 43843 / 130Z), this protein is DNA-directed RNA polymerase subunit omega.